Here is a 156-residue protein sequence, read N- to C-terminus: Small ribosomal subunit protein uS7 (156 aa).

The protein belongs to the universal ribosomal protein uS7 family. In terms of assembly, part of the 30S ribosomal subunit. Contacts proteins S9 and S11.

Functionally, one of the primary rRNA binding proteins, it binds directly to 16S rRNA where it nucleates assembly of the head domain of the 30S subunit. Is located at the subunit interface close to the decoding center, probably blocks exit of the E-site tRNA. The protein is Small ribosomal subunit protein uS7 of Streptococcus gordonii (strain Challis / ATCC 35105 / BCRC 15272 / CH1 / DL1 / V288).